The chain runs to 126 residues: Large-conductance mechanosensitive channel (126 aa).

2 consecutive transmembrane segments (helical) span residues Val-17 to Ile-37 and Gly-70 to Ile-90.

The protein belongs to the MscL family. As to quaternary structure, homopentamer.

The protein localises to the cell inner membrane. In terms of biological role, channel that opens in response to stretch forces in the membrane lipid bilayer. May participate in the regulation of osmotic pressure changes within the cell. This chain is Large-conductance mechanosensitive channel, found in Flavobacterium johnsoniae (strain ATCC 17061 / DSM 2064 / JCM 8514 / BCRC 14874 / CCUG 350202 / NBRC 14942 / NCIMB 11054 / UW101) (Cytophaga johnsonae).